The primary structure comprises 612 residues: Dihydroxy-acid dehydratase (612 aa).

Residue D81 participates in Mg(2+) binding. C122 contacts [2Fe-2S] cluster. Mg(2+) is bound by residues D123 and K124. The residue at position 124 (K124) is an N6-carboxylysine. Position 193 (C193) interacts with [2Fe-2S] cluster. Residue E489 coordinates Mg(2+). Residue S515 is the Proton acceptor of the active site.

This sequence belongs to the IlvD/Edd family. As to quaternary structure, homodimer. [2Fe-2S] cluster serves as cofactor. Requires Mg(2+) as cofactor.

The enzyme catalyses (2R)-2,3-dihydroxy-3-methylbutanoate = 3-methyl-2-oxobutanoate + H2O. The catalysed reaction is (2R,3R)-2,3-dihydroxy-3-methylpentanoate = (S)-3-methyl-2-oxopentanoate + H2O. Its pathway is amino-acid biosynthesis; L-isoleucine biosynthesis; L-isoleucine from 2-oxobutanoate: step 3/4. It functions in the pathway amino-acid biosynthesis; L-valine biosynthesis; L-valine from pyruvate: step 3/4. Its function is as follows. Functions in the biosynthesis of branched-chain amino acids. Catalyzes the dehydration of (2R,3R)-2,3-dihydroxy-3-methylpentanoate (2,3-dihydroxy-3-methylvalerate) into 2-oxo-3-methylpentanoate (2-oxo-3-methylvalerate) and of (2R)-2,3-dihydroxy-3-methylbutanoate (2,3-dihydroxyisovalerate) into 2-oxo-3-methylbutanoate (2-oxoisovalerate), the penultimate precursor to L-isoleucine and L-valine, respectively. In Xanthomonas axonopodis pv. citri (strain 306), this protein is Dihydroxy-acid dehydratase.